Here is a 480-residue protein sequence, read N- to C-terminus: Coronin-2B (480 aa).

WD repeat units lie at residues 85–125 (GHQG…LKRN), 135–177 (GHSR…KMID), 179–217 (HRDV…VLQE), 220–263 (CKTH…MPVT), and 265–308 (EEID…PYLT). Residues 436–475 (NELLRMFFRQQEEIRRLKEQLSQRDLLVRQLELELKNLRN) adopt a coiled-coil conformation.

It belongs to the WD repeat coronin family.

It localises to the cytoplasm. Its subcellular location is the cytoskeleton. May play a role in the reorganization of neuronal actin structure. The sequence is that of Coronin-2B (coro2b) from Xenopus tropicalis (Western clawed frog).